The following is a 198-amino-acid chain: Single-stranded DNA cytosine deaminase (198 aa).

A Bipartite nuclear localization signal motif is present at residues methionine 1–cysteine 30. Residues aspartate 2–glutamate 26 are interaction with SUPT6H. Residues glycine 23–leucine 129 enclose the CMP/dCMP-type deaminase domain. Threonine 27 bears the Phosphothreonine; by PKA mark. At serine 38 the chain carries Phosphoserine; by PKA. The tract at residues alanine 39 to cysteine 42 is important for interaction with CTNNBL1. Histidine 56 provides a ligand contact to Zn(2+). Glutamate 58 serves as the catalytic Proton donor. The Zn(2+) site is built by cysteine 87 and cysteine 90. A required for interaction with RNF126 region spans residues tyrosine 88–cysteine 116. The Nuclear export signal signature appears at leucine 183–phenylalanine 198.

It belongs to the cytidine and deoxycytidylate deaminase family. Interacts with CTNNBL1; the interaction is important for the immunoglobulin switch activity of AICDA. Interacts (via its NLS) with KPNA1. Interacts with PKA/PRKACA and PRKAR1A/PKR1. Interacts with SUPT6H, TRIM28 and NCL. Directly interacts with MCM3AP/GANP; this interaction may favor AICDA recruitment to immunoglobulin variable region genes, hence promoting somatic hypermutations. It depends on Zn(2+) as a cofactor. In terms of processing, ser-38 is the major site whereas Thr-27 is the minor site of phosphorylation. Phosphorylation regulates its class-switch recombination activity. Probably monoubiquitinated on several residues by RNF126. As to expression, expressed in germinal center B-cells (at protein level).

The protein resides in the nucleus. Its subcellular location is the cytoplasm. It carries out the reaction a 2'-deoxycytidine in single-stranded DNA + H2O + H(+) = a 2'-deoxyuridine in single-stranded DNA + NH4(+). In terms of biological role, single-stranded DNA-specific cytidine deaminase. Involved in somatic hypermutation (SHM), gene conversion, and class-switch recombination (CSR) in B-lymphocytes by deaminating C to U during transcription of Ig-variable (V) and Ig-switch (S) region DNA. Required for several crucial steps of B-cell terminal differentiation necessary for efficient antibody responses. May also play a role in the epigenetic regulation of gene expression by participating in DNA demethylation. The protein is Single-stranded DNA cytosine deaminase (Aicda) of Mus musculus (Mouse).